Reading from the N-terminus, the 715-residue chain is Interferon-induced GTP-binding protein Mx2 (715 aa).

The Dynamin-type G domain occupies 115 to 387 (DLALPAIAVI…LIMHIQKSLP (273 aa)). The interval 125–132 (GDQSSGKS) is G1 motif. 125–132 (GDQSSGKS) lines the GTP pocket. Positions 150 to 152 (VTR) are G2 motif. The segment at 225 to 228 (DLPG) is G3 motif. GTP-binding positions include 225-229 (DLPGI) and 294-297 (TKPD). The segment at 294–297 (TKPD) is G4 motif. The G5 motif stretch occupies residues 326-329 (KCRG). The 92-residue stretch at 623–714 (FTEIGIHLNA…ALCQFSSKEI (92 aa)) folds into the GED domain.

Belongs to the TRAFAC class dynamin-like GTPase superfamily. Dynamin/Fzo/YdjA family.

The protein resides in the cytoplasm. It is found in the nucleus. It localises to the nuclear pore complex. Its function is as follows. Interferon-induced dynamin-like GTPase with potent antiviral activity against human immunodeficiency virus type 1 (HIV-1). Acts by targeting the viral capsid and affects the nuclear uptake and/or stability of the HIV-1 replication complex and the subsequent chromosomal integration of the proviral DNA. Exhibits antiviral activity also against simian immunodeficiency virus (SIV-mnd). May play a role in regulating nucleocytoplasmic transport and cell-cycle progression. The polypeptide is Interferon-induced GTP-binding protein Mx2 (MX2) (Homo sapiens (Human)).